Reading from the N-terminus, the 102-residue chain is Co-chaperonin GroES (102 aa).

This sequence belongs to the GroES chaperonin family. Heptamer of 7 subunits arranged in a ring. Interacts with the chaperonin GroEL.

The protein resides in the cytoplasm. Its function is as follows. Together with the chaperonin GroEL, plays an essential role in assisting protein folding. The GroEL-GroES system forms a nano-cage that allows encapsulation of the non-native substrate proteins and provides a physical environment optimized to promote and accelerate protein folding. GroES binds to the apical surface of the GroEL ring, thereby capping the opening of the GroEL channel. In Chlamydia muridarum (strain MoPn / Nigg), this protein is Co-chaperonin GroES.